Here is a 68-residue protein sequence, read N- to C-terminus: Large ribosomal subunit protein bL35 (68 aa).

It belongs to the bacterial ribosomal protein bL35 family.

This is Large ribosomal subunit protein bL35 from Rickettsia conorii (strain ATCC VR-613 / Malish 7).